The sequence spans 445 residues: Phosphoglucosamine mutase (445 aa).

Serine 102 serves as the catalytic Phosphoserine intermediate. Mg(2+)-binding residues include serine 102, aspartate 241, aspartate 243, and aspartate 245. The residue at position 102 (serine 102) is a Phosphoserine.

The protein belongs to the phosphohexose mutase family. Mg(2+) is required as a cofactor. Activated by phosphorylation.

It catalyses the reaction alpha-D-glucosamine 1-phosphate = D-glucosamine 6-phosphate. Functionally, catalyzes the conversion of glucosamine-6-phosphate to glucosamine-1-phosphate. This chain is Phosphoglucosamine mutase, found in Shigella flexneri serotype 5b (strain 8401).